The primary structure comprises 148 residues: SsrA-binding protein (148 aa).

Residues 119–148 (AKGKKQHDKRQSMKEADWKREKQRLIKHTR) form a disordered region. Residues 127-142 (KRQSMKEADWKREKQR) show a composition bias toward basic and acidic residues.

It belongs to the SmpB family.

It localises to the cytoplasm. Functionally, required for rescue of stalled ribosomes mediated by trans-translation. Binds to transfer-messenger RNA (tmRNA), required for stable association of tmRNA with ribosomes. tmRNA and SmpB together mimic tRNA shape, replacing the anticodon stem-loop with SmpB. tmRNA is encoded by the ssrA gene; the 2 termini fold to resemble tRNA(Ala) and it encodes a 'tag peptide', a short internal open reading frame. During trans-translation Ala-aminoacylated tmRNA acts like a tRNA, entering the A-site of stalled ribosomes, displacing the stalled mRNA. The ribosome then switches to translate the ORF on the tmRNA; the nascent peptide is terminated with the 'tag peptide' encoded by the tmRNA and targeted for degradation. The ribosome is freed to recommence translation, which seems to be the essential function of trans-translation. The chain is SsrA-binding protein from Neisseria meningitidis serogroup C (strain 053442).